Here is a 301-residue protein sequence, read N- to C-terminus: Small ribosomal subunit protein uS2 (301 aa).

This sequence belongs to the universal ribosomal protein uS2 family.

This chain is Small ribosomal subunit protein uS2, found in Acidobacterium capsulatum (strain ATCC 51196 / DSM 11244 / BCRC 80197 / JCM 7670 / NBRC 15755 / NCIMB 13165 / 161).